A 264-amino-acid polypeptide reads, in one-letter code: Apolipoprotein A-I (264 aa).

Residues 1-18 form the signal peptide; it reads MKAVVLAVALVFLTGSQA. 2 consecutive repeat copies span residues 67–88 and 89–110. The interval 67–264 is 10 X approximate tandem repeats; the sequence is LNLLENWDTL…DKARETLTAQ (198 aa). Met109 carries the post-translational modification Methionine sulfoxide. A 3; half-length repeat occupies 111 to 121; sequence KDLEEVKQNVQ. 3 repeat units span residues 122–143, 144–165, and 166–187. The stretch at 188–207 is one 7; truncated repeat; it reads PHSDKLRESLAQRLAELKSN. Repeat unit 8 spans residues 208–229; the sequence is PTLNEYHTRAKTHLNTFGEKAR. One copy of the 9; half-length repeat lies at 230–240; it reads PALEDLRHTLI. Copy 10 of the repeat occupies 241–264; the sequence is PILDTLKTKVKSVIDKARETLTAQ.

The protein belongs to the apolipoprotein A1/A4/E family. In terms of assembly, homodimer. Interacts with APOA1BP and CLU. Component of a sperm activating protein complex (SPAP), consisting of APOA1, an immunoglobulin heavy chain, an immunoglobulin light chain and albumin. Interacts with NDRG1. Interacts with SCGB3A2. Interacts with NAXE and YJEFN3. In terms of processing, glycosylated. Post-translationally, palmitoylated. Phosphorylation sites are present in the extracellular medium.

It localises to the secreted. In terms of biological role, participates in the reverse transport of cholesterol from tissues to the liver for excretion by promoting cholesterol efflux from tissues and by acting as a cofactor for the lecithin cholesterol acyltransferase (LCAT). As part of the SPAP complex, activates spermatozoa motility. This chain is Apolipoprotein A-I (Apoa1), found in Mus pahari (Gairdner's shrew-mouse).